We begin with the raw amino-acid sequence, 406 residues long: Zinc finger protein CONSTANS-LIKE 6 (406 aa).

Cysteine 17, cysteine 20, cysteine 40, and histidine 45 together coordinate Zn(2+). A B box-type; atypical zinc finger spans residues 17 to 59; it reads CDSCVKRRARWYCAADDAFLCHACDGSVHSANPLARRHERVRL. Residues 63 to 95 form a disordered region; it reads SAGKYRHASPPHQATWHQGFTRKARTPRGGKKS. Over residues 82–95 the composition is skewed to basic residues; sequence FTRKARTPRGGKKS. A CCT domain is found at 357–399; it reads REARVSRYREKRRTRLFSKKIRYEVRKLNAEKRPRMKGRFVKR.

Belongs to the CONSTANS family.

Its subcellular location is the nucleus. The sequence is that of Zinc finger protein CONSTANS-LIKE 6 (COL6) from Arabidopsis thaliana (Mouse-ear cress).